We begin with the raw amino-acid sequence, 893 residues long: UPF0182 protein CLD_0809 (893 aa).

A run of 7 helical transmembrane segments spans residues 9–29 (IPLF…NFII), 49–69 (AIII…WMYY), 94–114 (LFFI…SSSY), 154–174 (VIIS…FILE), 202–222 (LAIV…IKIW), 246–266 (FYKI…LSIV), and 273–293 (VSIC…ASFL).

It belongs to the UPF0182 family.

It localises to the cell membrane. This Clostridium botulinum (strain Okra / Type B1) protein is UPF0182 protein CLD_0809.